Here is a 317-residue protein sequence, read N- to C-terminus: tRNA dimethylallyltransferase (317 aa).

18–25 serves as a coordination point for ATP; that stretch reads GPTATGKT. 20 to 25 is a binding site for substrate; that stretch reads TATGKT. Interaction with substrate tRNA regions lie at residues 43–46, 167–171, and 281–288; these read DSAL, QRIQR, and KRQITWLR.

The protein belongs to the IPP transferase family. In terms of assembly, monomer. Mg(2+) serves as cofactor.

It catalyses the reaction adenosine(37) in tRNA + dimethylallyl diphosphate = N(6)-dimethylallyladenosine(37) in tRNA + diphosphate. Functionally, catalyzes the transfer of a dimethylallyl group onto the adenine at position 37 in tRNAs that read codons beginning with uridine, leading to the formation of N6-(dimethylallyl)adenosine (i(6)A). In Alkalilimnicola ehrlichii (strain ATCC BAA-1101 / DSM 17681 / MLHE-1), this protein is tRNA dimethylallyltransferase.